Here is a 308-residue protein sequence, read N- to C-terminus: Ceramide synthase 1 LOH3 (308 aa).

6 helical membrane passes run valine 25–phenylalanine 45, cysteine 82–phenylalanine 102, leucine 128–glutamate 148, phenylalanine 154–cysteine 174, phenylalanine 213–leucine 233, and tyrosine 258–methionine 278. Residues arginine 73–glutamine 287 enclose the TLC domain. Phosphoserine occurs at positions 298 and 300.

As to expression, expressed ubiquitously at low levels. Not observed in pollen.

It is found in the endoplasmic reticulum membrane. The enzyme catalyses (4R)-hydroxysphinganine + a fatty acyl-CoA = an N-acyl-(4R)-4-hydroxysphinganine + CoA + H(+). It catalyses the reaction a sphingoid base + tetracosanoyl-CoA = an N-tetracosanoyl-sphingoid base + CoA + H(+). It carries out the reaction (4R)-hydroxysphinganine + hexadecanoyl-CoA = N-hexadecanoyl-(4R)-hydroxysphinganine + CoA + H(+). The catalysed reaction is (4R)-hydroxysphinganine + octadecanoyl-CoA = N-octadecanoyl-(4R)-hydroxysphinganine + CoA + H(+). The enzyme catalyses (4R)-hydroxysphinganine + eicosanoyl-CoA = N-eicosanoyl-(4R)-hydroxysphinganine + CoA + H(+). It catalyses the reaction docosanoyl-CoA + (4R)-hydroxysphinganine = N-docosanoyl-(4R)-hydroxysphinganine + CoA + H(+). It carries out the reaction hexacosanoyl-CoA + (4R)-hydroxysphinganine = N-hexacosanoyl-(4R)-hydroxysphinganine + CoA + H(+). The catalysed reaction is tetracosanoyl-CoA + (4R)-hydroxysphinganine = N-tetracosanoyl-(4R)-hydroxysphinganine + CoA + H(+). The enzyme catalyses tetracosanoyl-CoA + sphing-4-enine = N-tetracosanoyl-sphing-4-enine + CoA + H(+). It catalyses the reaction sphinga-(4E,8Z)-dienine + tetracosanoyl-CoA = N-tetracosanoylsphinga-(4E,8Z)-dienine + CoA + H(+). It carries out the reaction sphinga-(4E,8E)-dienine + tetracosanoyl-CoA = N-tetracosanoylsphinga-(4E,8E)-dienine + CoA + H(+). The catalysed reaction is (4R)-hydroxysphing-(8Z)-enine + tetracosanoyl-CoA = N-tetracosanoyl-(4R)-hydroxysphing-(8Z)-enine + CoA + H(+). The enzyme catalyses (4R)-hydroxysphing-(8E)-enine + tetracosanoyl-CoA = N-tetracosanoyl-(4R)-hydroxysphing-(8E)-enine + CoA + H(+). It participates in sphingolipid metabolism. Its activity is regulated as follows. Inhibited by the mycotoxin fumonisin B(1), a sphingosine analog mycotoxins produced by pathogenic fungi. Repressed by divalent cation such as magnesium Mg(2+), copper Cu(2+), zinc Zn(2+), manganese Mn(2+), calcium Ca(2+) and cobalt Co(2+). Essential for plant growth, promotes cell division in root meristems. Catalyzes the biosynthesis of ceramide sphingolipids with C(16) to C(28) fatty acids, structural membrane lipids involved in membrane trafficking (e.g. early endosomes) and cell polarity (e.g. polar auxin transport related proteins); active on a broad substrate spectrum, both regarding chain lengths of fatty acids and the sphingoid base, such as long-chain base (LCB) phytosphingosine (t18:0). Mediates resistance to sphinganine-analog mycotoxins (SAMs, e.g. fumonisin B(1)) by restoring the sphingolipid biosynthesis. Could salvage the transport of GPI-anchored proteins from the endoplasmic reticulum to the Golgi apparatus in ceramides-depleted cells after SAM exposure. Contributes to hypoxic conditions tolerance (e.g. submergences), especially in the dark, by promoting the formation of very-long-chain (VLC) ceramide species (22:1, 24:1 and 26:1) and of VLC unsaturated ceramides, which are modulating CTR1-mediated ethylene signaling leading to endoplasmic reticulum (ER)-to-nucleus translocation of EIN2 and EIN3. This is Ceramide synthase 1 LOH3 from Arabidopsis thaliana (Mouse-ear cress).